The following is a 429-amino-acid chain: 3-phosphoshikimate 1-carboxyvinyltransferase (429 aa).

3 residues coordinate 3-phosphoshikimate: lysine 23, serine 24, and arginine 28. Residue lysine 23 participates in phosphoenolpyruvate binding. Residues glycine 95 and arginine 123 each coordinate phosphoenolpyruvate. 4 residues coordinate 3-phosphoshikimate: serine 168, glutamine 170, aspartate 316, and lysine 343. Glutamine 170 contributes to the phosphoenolpyruvate binding site. Catalysis depends on aspartate 316, which acts as the Proton acceptor. Phosphoenolpyruvate-binding residues include arginine 347 and arginine 389.

It belongs to the EPSP synthase family. As to quaternary structure, monomer.

It localises to the cytoplasm. It carries out the reaction 3-phosphoshikimate + phosphoenolpyruvate = 5-O-(1-carboxyvinyl)-3-phosphoshikimate + phosphate. Its pathway is metabolic intermediate biosynthesis; chorismate biosynthesis; chorismate from D-erythrose 4-phosphate and phosphoenolpyruvate: step 6/7. Functionally, catalyzes the transfer of the enolpyruvyl moiety of phosphoenolpyruvate (PEP) to the 5-hydroxyl of shikimate-3-phosphate (S3P) to produce enolpyruvyl shikimate-3-phosphate and inorganic phosphate. This is 3-phosphoshikimate 1-carboxyvinyltransferase from Bacillus anthracis (strain A0248).